The primary structure comprises 251 residues: Triosephosphate isomerase 1 (251 aa).

9–11 lines the substrate pocket; it reads NWK. His95 acts as the Electrophile in catalysis. Residue Glu167 is the Proton acceptor of the active site. Substrate contacts are provided by residues Gly173, Ser213, and 234–235; that span reads GG.

This sequence belongs to the triosephosphate isomerase family. Homodimer.

The protein localises to the cytoplasm. It catalyses the reaction D-glyceraldehyde 3-phosphate = dihydroxyacetone phosphate. The protein operates within carbohydrate biosynthesis; gluconeogenesis. Its pathway is carbohydrate degradation; glycolysis; D-glyceraldehyde 3-phosphate from glycerone phosphate: step 1/1. In terms of biological role, involved in the gluconeogenesis. Catalyzes stereospecifically the conversion of dihydroxyacetone phosphate (DHAP) to D-glyceraldehyde-3-phosphate (G3P). This Listeria innocua serovar 6a (strain ATCC BAA-680 / CLIP 11262) protein is Triosephosphate isomerase 1.